A 340-amino-acid polypeptide reads, in one-letter code: Ferrochelatase (340 aa).

His-189 and Glu-292 together coordinate Fe cation.

This sequence belongs to the ferrochelatase family.

It is found in the cytoplasm. It carries out the reaction heme b + 2 H(+) = protoporphyrin IX + Fe(2+). It participates in porphyrin-containing compound metabolism; protoheme biosynthesis; protoheme from protoporphyrin-IX: step 1/1. Its function is as follows. Catalyzes the ferrous insertion into protoporphyrin IX. This chain is Ferrochelatase, found in Pseudomonas syringae pv. syringae (strain B728a).